A 210-amino-acid polypeptide reads, in one-letter code: Large ribosomal subunit protein uL4 (210 aa).

Residues 44-54 (KRQGTASTLTR) show a composition bias toward polar residues. The tract at residues 44–85 (KRQGTASTLTRSEVRGGGRKPYKQKGTGRARQGSIRTPLRPG) is disordered. Basic residues predominate over residues 60-71 (GGRKPYKQKGTG).

It belongs to the universal ribosomal protein uL4 family. As to quaternary structure, part of the 50S ribosomal subunit.

Its function is as follows. One of the primary rRNA binding proteins, this protein initially binds near the 5'-end of the 23S rRNA. It is important during the early stages of 50S assembly. It makes multiple contacts with different domains of the 23S rRNA in the assembled 50S subunit and ribosome. Forms part of the polypeptide exit tunnel. The chain is Large ribosomal subunit protein uL4 from Prochlorococcus marinus (strain MIT 9301).